Consider the following 372-residue polypeptide: Chaperone protein DnaJ (372 aa).

The region spanning Asp5–Gly69 is the J domain. The CR-type zinc finger occupies Gly139–Arg221. The Zn(2+) site is built by Cys152, Cys155, Cys169, Cys172, Cys195, Cys198, Cys209, and Cys212. CXXCXGXG motif repeat units follow at residues Cys152–Gly159, Cys169–Gly176, Cys195–Gly202, and Cys209–Gly216.

The protein belongs to the DnaJ family. In terms of assembly, homodimer. It depends on Zn(2+) as a cofactor.

It localises to the cytoplasm. Participates actively in the response to hyperosmotic and heat shock by preventing the aggregation of stress-denatured proteins and by disaggregating proteins, also in an autonomous, DnaK-independent fashion. Unfolded proteins bind initially to DnaJ; upon interaction with the DnaJ-bound protein, DnaK hydrolyzes its bound ATP, resulting in the formation of a stable complex. GrpE releases ADP from DnaK; ATP binding to DnaK triggers the release of the substrate protein, thus completing the reaction cycle. Several rounds of ATP-dependent interactions between DnaJ, DnaK and GrpE are required for fully efficient folding. Also involved, together with DnaK and GrpE, in the DNA replication of plasmids through activation of initiation proteins. This Mycoplasma capricolum subsp. capricolum (strain California kid / ATCC 27343 / NCTC 10154) protein is Chaperone protein DnaJ.